The primary structure comprises 487 residues: Adenylosuccinate synthetase, chloroplastic (487 aa).

A chloroplast-targeting transit peptide spans M1–S46. Residues G74–K80 and G102–T104 each bind GTP. The active-site Proton acceptor is the D75. Mg(2+) contacts are provided by D75 and G102. IMP is bound by residues D75–K78, N100–H103, T192, R206, Q286, T301, and R365. Catalysis depends on H103, which acts as the Proton donor. T361–R367 provides a ligand contact to substrate. Residues R367, K393–D395, and G476–G478 contribute to the GTP site.

It belongs to the adenylosuccinate synthetase family. In terms of assembly, homodimer. Mg(2+) serves as cofactor.

The protein localises to the plastid. Its subcellular location is the chloroplast. The catalysed reaction is IMP + L-aspartate + GTP = N(6)-(1,2-dicarboxyethyl)-AMP + GDP + phosphate + 2 H(+). The protein operates within purine metabolism; AMP biosynthesis via de novo pathway; AMP from IMP: step 1/2. In terms of biological role, plays an important role in the de novo pathway and in the salvage pathway of purine nucleotide biosynthesis. Catalyzes the first committed step in the biosynthesis of AMP from IMP. The sequence is that of Adenylosuccinate synthetase, chloroplastic from Oryza sativa subsp. indica (Rice).